The following is a 135-amino-acid chain: Large ribosomal subunit protein uL18 (135 aa).

Positions 1–25 (MAQTENQKSKRIPLGKDVSTQRRLS) are disordered.

Belongs to the universal ribosomal protein uL18 family. In terms of assembly, part of the 50S ribosomal subunit; part of the 5S rRNA/L5/L18/L25 subcomplex. Contacts the 5S and 23S rRNAs.

Functionally, this is one of the proteins that bind and probably mediate the attachment of the 5S RNA into the large ribosomal subunit, where it forms part of the central protuberance. This Nocardia farcinica (strain IFM 10152) protein is Large ribosomal subunit protein uL18.